Consider the following 213-residue polypeptide: Peptidyl-prolyl cis-trans isomerase B (213 aa).

Positions 1 to 23 (MAVLRVLCGLLLVSILFLGFVLS) are cleaved as a signal peptide. Positions 35–197 (FFDIEVDEQP…KSVKIANCGH (163 aa)) constitute a PPIase cyclophilin-type domain. A Prevents secretion from ER motif is present at residues 210–213 (DAAE).

It belongs to the cyclophilin-type PPIase family. PPIase B subfamily.

The protein resides in the endoplasmic reticulum lumen. The enzyme catalyses [protein]-peptidylproline (omega=180) = [protein]-peptidylproline (omega=0). With respect to regulation, inhibited by cyclosporin A (CsA). Functionally, PPIases accelerate the folding of proteins. It catalyzes the cis-trans isomerization of proline imidic peptide bonds in oligopeptides. The polypeptide is Peptidyl-prolyl cis-trans isomerase B (Schistosoma japonicum (Blood fluke)).